A 634-amino-acid chain; its full sequence is Phototropic-responsive NPH3 family protein NPY2 (634 aa).

Residues 29 to 97 enclose the BTB domain; the sequence is SDISVDVEGS…CYGMTVTLSA (69 aa). Positions 207-488 constitute an NPH3 domain; the sequence is DWWVEDLCEL…VQVLFFEQVR (282 aa). Tyr429 is modified (phosphotyrosine). Disordered regions lie at residues 492–517 and 584–634; these read SSGS…YGSS and QLQS…VSVS. Residues 588–602 show a composition bias toward gly residues; the sequence is KGGGEKNNGGGGGGS. Residues 619 to 634 are compositionally biased toward polar residues; the sequence is KTATPSRNLTRRVSVS.

The protein belongs to the NPH3 family. In terms of tissue distribution, specifically expressed in the hypophysis and the root meristems in the embryos. Highly expressed in primary root tips and radicles.

It localises to the cell membrane. It is found in the cytoplasm. The protein localises to the cytosol. The protein operates within protein modification; protein ubiquitination. May act as a substrate-specific adapter of an E3 ubiquitin-protein ligase complex (CUL3-RBX1-BTB) which mediates the ubiquitination and subsequent proteasomal degradation of target proteins. Plays an essential role in auxin-mediated organogenesis and in root gravitropic responses through the control of PIN proteins (e.g. PIN1 and PIN2) polarity in the root tip endodermal cell layer and in shoot epidermis. Recruited to the plasma membrane by PINs (e.g. PIN1 and PIN2) and, in concert with AGC kinases-mediated (e.g. D6PK and PID) PINs phosphorylation, maintains their polarity through limiting lateral diffusion-based escape. The sequence is that of Phototropic-responsive NPH3 family protein NPY2 from Arabidopsis thaliana (Mouse-ear cress).